The sequence spans 80 residues: Cytochrome c oxidase subunit 7A1, mitochondrial (80 aa).

Residues 1–21 (MRALRVSQALVRSFSSSTRSH) constitute a mitochondrion transit peptide. At 22–46 (LENRVAEKQKLFQADNDLPVHLKGG) the chain is on the mitochondrial matrix side. The chain crosses the membrane as a helical span at residues 47–75 (GMDNVLYRLTMTLTLGGTAYCLYCLGWAS). At 76 to 80 (FPHKK) the chain is on the mitochondrial intermembrane side.

Belongs to the cytochrome c oxidase VIIa family. As to quaternary structure, component of the complex IV (CIV, cytochrome c oxidase), a multisubunit enzyme composed of 14 subunits. The complex is composed of a catalytic core of 3 subunits MT-CO1, MT-CO2 and MT-CO3, encoded in the mitochondrial DNA, and 11 supernumerary subunits COX4I, COX5A, COX5B, COX6A, COX6B, COX6C, COX7A, COX7B, COX7C, COX8 and NDUFA4, which are encoded in the nuclear genome. The complex exists as a monomer or a dimer and forms supercomplexes (SCs) in the inner mitochondrial membrane with NADH-ubiquinone oxidoreductase (complex I, CI) and ubiquinol-cytochrome c oxidoreductase (cytochrome b-c1 complex, complex III, CIII), resulting in different assemblies (supercomplex SCI(1)III(2)IV(1) and megacomplex MCI(2)III(2)IV(2)).

It is found in the mitochondrion inner membrane. The protein operates within energy metabolism; oxidative phosphorylation. Its function is as follows. Component of the mitochondrial respiratory complex IV (CIV, also named cytochrome c oxidase complex), the last enzyme in the mitochondrial electron transport chain which drives oxidative phosphorylation. The CIV complex is the component of the respiratory chain that catalyzes the reduction of oxygen to water. Acts as an assembly factor that specifically drives the homodimerization of CIV complexes, mediating the formation of mitochondrial respiratory supercomplexes (respirasomes) containing two CIV: supercomplxes with two molecules of CIV show improved activity. Despite being highly expressed in brown adipose tissue, not required for thermogenesis. The chain is Cytochrome c oxidase subunit 7A1, mitochondrial from Mus musculus (Mouse).